Consider the following 685-residue polypeptide: Iron(3+)-hydroxamate import system permease protein FhuB (685 aa).

Transmembrane regions (helical) follow at residues alanine 35–valine 55, leucine 87–valine 107, valine 120–leucine 140, glutamine 143–glycine 163, isoleucine 172–phenylalanine 192, glutamine 222–leucine 242, alanine 265–phenylalanine 285, leucine 302–tryptophan 322, methionine 328–leucine 348, leucine 373–phenylalanine 393, tryptophan 416–isoleucine 436, alanine 456–leucine 476, glycine 479–phenylalanine 499, methionine 504–alanine 524, alanine 553–leucine 573, isoleucine 592–leucine 612, methionine 632–cysteine 652, and tyrosine 660–leucine 680.

The protein belongs to the binding-protein-dependent transport system permease family. FecCD subfamily. The complex is composed of two ATP-binding proteins (FhuC), a transmembrane protein (FhuB) and a solute-binding protein (FhuD).

It is found in the cell inner membrane. Part of the ABC transporter complex FhuCDB involved in iron(3+)-hydroxamate import. Responsible for the translocation of the substrate across the membrane. Involved in ferrioxamine-mediated iron(III) utilization. In Salmonella typhimurium (strain LT2 / SGSC1412 / ATCC 700720), this protein is Iron(3+)-hydroxamate import system permease protein FhuB (fhuB).